Consider the following 299-residue polypeptide: Serine/threonine-protein kinase 1 (299 aa).

Positions isoleucine 39 to phenylalanine 277 constitute a Protein kinase domain. ATP contacts are provided by residues phenylalanine 45 to valine 53 and lysine 66. The active-site Proton acceptor is aspartate 153.

This sequence belongs to the protein kinase superfamily. Ser/Thr protein kinase family.

Its subcellular location is the virion. The protein resides in the host cytoplasm. It carries out the reaction L-seryl-[protein] + ATP = O-phospho-L-seryl-[protein] + ADP + H(+). The catalysed reaction is L-threonyl-[protein] + ATP = O-phospho-L-threonyl-[protein] + ADP + H(+). Essential for viral replication. It may mediate the virus progression through DNA replication. In African swine fever virus (isolate Tick/Malawi/Lil 20-1/1983) (ASFV), this protein is Serine/threonine-protein kinase 1.